We begin with the raw amino-acid sequence, 98 residues long: Integration host factor subunit beta (98 aa).

It belongs to the bacterial histone-like protein family. In terms of assembly, heterodimer of an alpha and a beta chain.

This protein is one of the two subunits of integration host factor, a specific DNA-binding protein that functions in genetic recombination as well as in transcriptional and translational control. This is Integration host factor subunit beta from Teredinibacter turnerae (strain ATCC 39867 / T7901).